We begin with the raw amino-acid sequence, 270 residues long: Maximins-S type D (270 aa).

An N-terminal signal peptide occupies residues 1-18 (MNFNYFILVLFFITSGHA). Propeptides lie at residues 19–35 (KSET…HIKR) and 52–65 (SAEE…LVTR). Position 83 is an asparagine amide (N83). Positions 87 to 100 (SAEEQDLAEDLVTR) are excised as a propeptide. Residue K118 is modified to Lysine amide. The propeptide occupies 122–135 (SAEDQDLAEDLVTR). The residue at position 153 (N153) is an Asparagine amide. Residues 157–170 (SAEEQDLAEHLVTR) constitute a propeptide that is removed on maturation. An Asparagine amide modification is found at N188. Residues 192–205 (SAEEQDLVEDLVTR) constitute a propeptide that is removed on maturation. A Lysine amide modification is found at K223. The propeptide occupies 227–240 (SAEEQDLAEDLVTR). K258 is subject to Lysine amide. The propeptide occupies 262-270 (SAEQEKDMK).

The protein belongs to the maximin-S family. In terms of tissue distribution, expressed by the skin dorsal glands.

It is found in the secreted. Maximin-S1 has no antimicrobial activity. Has no hemolytic activity. In terms of biological role, maximin-S2 has an activity against mycoplasma but has no activity against common Gram-positive and Gram-negative bacteria nor fungi. Has no hemolytic activity. Its function is as follows. Maximin-S3 has an activity against mycoplasma but has no activity against common Gram-positive and Gram-negative bacteria nor fungi. Has no hemolytic activity. Functionally, maximin-S4 has an activity against mycoplasma but has no activity against common Gram-positive and Gram-negative bacteria nor fungi. Has no hemolytic activity. Maximin-S5 has an activity against mycoplasma but has no activity against common Gram-positive and Gram-negative bacteria nor fungi. Has no hemolytic activity. The sequence is that of Maximins-S type D from Bombina maxima (Giant fire-bellied toad).